A 1549-amino-acid chain; its full sequence is Trichohyalin (1549 aa).

The tract at residues 1-91 (MSPLLRSIFN…AAACYYALGQ (91 aa)) is S-100-like. EF-hand domains are found at residues 23 to 48 (CDGT…LRKP) and 49 to 84 (HDPE…VAAA). Ca(2+) is bound by residues T27, D32, D62, D64, D66, and E73. Disordered regions lie at residues 97–125 (EKEA…PQDR), 157–180 (LQRR…GREL), 262–359 (LRRK…KQEQ), and 404–448 (QREK…RQER). 3 stretches are compositionally biased toward basic and acidic residues: residues 171–180 (LQQRPKGREL), 262–278 (LRRK…RQEQ), and 317–335 (HRQE…ERQQ). Residues 336–348 (EQQISEEVQSLQE) are compositionally biased toward low complexity. A compositionally biased stretch (basic and acidic residues) spans 349–359 (DQGRQRLKQEQ). Repeat copies occupy residues 413–448 (ERQY…RQER), 449–476 (EKQY…RQER), 477–504 (EKQY…RQER), 505–532 (ERQY…RQER), 533–560 (ERQY…RQER), 561–588 (EKQY…RQER), 589–616 (EKQY…RQER), 617–644 (ERQY…RQER), 645–678 (ERQY…RQER), 679–706 (ERQY…RQER), 707–742 (ERQY…RQVR), 743–771 (ERKY…DREK), 772–796 (RQYL…RQER), and 797–832 (ERQY…RQEL). The segment at 413–832 (ERQYREVELQ…ECEKRRRQEL (420 aa)) is 14 X 28 AA approximate tandem repeats. 3 disordered regions span residues 782-803 (REEE…YREE), 839-942 (EELQ…RKFR), and 980-1000 (QLRQ…ERDR). 3 stretches are compositionally biased toward basic and acidic residues: residues 850-884 (FRDD…DSWV), 895-918 (PLQD…KRDS), and 925-942 (LLER…RKFR). 23 repeat units span residues 938 to 961 (DRKF…YLEE), 962 to 985 (DRKF…RQER), 986 to 1021 (DRKF…RQER), 1022 to 1044 (DRKF…RQER), 1045 to 1067 (DRKF…RQER), 1068 to 1090 (DRKF…LRQE), 1091 to 1121 (RNRK…RQKR), 1122 to 1144 (DRKF…RQER), 1145 to 1167 (DRKF…RQER), 1168 to 1197 (DRKF…RQER), 1198 to 1227 (DRKF…RQER), 1228 to 1250 (DRKF…RQER), 1251 to 1273 (DRKF…RQER), 1274 to 1296 (DRKF…RQER), 1297 to 1319 (DRKF…RQER), 1320 to 1342 (DRKF…RQER), 1343 to 1368 (DRKF…ELEG), 1369 to 1391 (VFSQ…QRQR), 1392 to 1416 (DRKF…VQEQ), 1417 to 1439 (DRKF…RRRQ), 1440 to 1461 (QLDQ…RRQE), 1462 to 1484 (QELR…EEEQ), and 1485 to 1507 (LRRQ…SRRQ). Positions 938 to 1507 (DRKFREEEQL…ERDVQQSRRQ (570 aa)) are 23 X 23 AA approximate tandem repeats. Residues 1489–1523 (QQEEQKRRQERDVQQSRRQVWEEDKGRRQVLEAGK) are compositionally biased toward basic and acidic residues. The disordered stretch occupies residues 1489-1549 (QQEEQKRRQE…IQEQRSQYRP (61 aa)).

It belongs to the S100-fused protein family. In terms of assembly, homodimer. Substrate of transglutaminase. Some 200 arginines are probably converted to citrullines by peptidylarginine deimidase. Found in the hard keratinizing tissues such as the inner root sheath (IRS) of hair follicles and medulla, and in the epithelia of the tongue, hoof and rumen.

In terms of biological role, intermediate filament-associated protein that associates in regular arrays with keratin intermediate filaments (KIF) of the inner root sheath cells of the hair follicle and the granular layer of the epidermis. It later becomes cross-linked to KIF by isodipeptide bonds. It may serve as scaffold protein, together with involucrin, in the organization of the cell envelope or even anchor the cell envelope to the KIF network. It may be involved in its own calcium-dependent postsynthetic processing during terminal differentiation. The polypeptide is Trichohyalin (TCHH) (Ovis aries (Sheep)).